A 174-amino-acid chain; its full sequence is Adipose-secreted signaling protein (174 aa).

Alanine 2 bears the N-acetylalanine mark. Position 147 is a phosphothreonine (threonine 147).

The protein belongs to the ADISSP family.

It is found in the secreted. In terms of biological role, adipocyte-secreted protein (adipokine) that acts as a key regulator for white adipose tissue (WAT) thermogenesis and glucose homeostasis at least in part through activation of protein kinase A (PKA). This chain is Adipose-secreted signaling protein, found in Bos taurus (Bovine).